The primary structure comprises 316 residues: Olfactory receptor 4N4 (316 aa).

The Extracellular portion of the chain corresponds to 1–25 (MKIANNTVVTEFILLGLTQSQDIQL). The N-linked (GlcNAc...) asparagine glycan is linked to N5. The chain crosses the membrane as a helical span at residues 26–49 (LVFVLILIFYLIILPGNFLIIFTI). At 50 to 57 (RSDPGLTA) the chain is on the cytoplasmic side. Residues 58-79 (PLYLFLGNLAFLDASYSFIVAP) traverse the membrane as a helical segment. Over 80-100 (RMLVDFLSEKKVISYRGCITQ) the chain is Extracellular. C97 and C189 are oxidised to a cystine. A helical membrane pass occupies residues 101 to 120 (LFFLHFLGGGEGLLLVVMAF). The Cytoplasmic portion of the chain corresponds to 121–139 (DRYIAICRPLHCSTVMNPR). The chain crosses the membrane as a helical span at residues 140–158 (ACYAMMLALWLGGFVHSII). The Extracellular portion of the chain corresponds to 159–195 (QVVLILRLPFCGPNQLDNFFCDVRQVIKLACTDMFVV). A helical membrane pass occupies residues 196-219 (ELLMVFNSGLMTLLCFLGLLASYA). Residues 220-235 (VILCHVRRAASEGKNK) lie on the Cytoplasmic side of the membrane. The helical transmembrane segment at 236–258 (AMSTCTTRVIIILLMFGPAIFIY) threads the bilayer. Residues 259 to 269 (MCPFRALPADK) lie on the Extracellular side of the membrane. Residues 270–289 (MVSLFHTVIFPLMNPMIYTL) traverse the membrane as a helical segment. The Cytoplasmic segment spans residues 290–316 (RNQEVKTSMKRLLSRHVVCQVDFIIRN).

The protein belongs to the G-protein coupled receptor 1 family.

It localises to the cell membrane. Functionally, odorant receptor. This chain is Olfactory receptor 4N4 (OR4N4), found in Homo sapiens (Human).